Consider the following 416-residue polypeptide: Serine hydroxymethyltransferase (416 aa).

Residues Leu-118 and 122 to 124 contribute to the (6S)-5,6,7,8-tetrahydrofolate site; that span reads GHL. Residue Lys-226 is modified to N6-(pyridoxal phosphate)lysine. Glu-242 is a binding site for (6S)-5,6,7,8-tetrahydrofolate.

The protein belongs to the SHMT family. As to quaternary structure, homodimer. It depends on pyridoxal 5'-phosphate as a cofactor.

Its subcellular location is the cytoplasm. It catalyses the reaction (6R)-5,10-methylene-5,6,7,8-tetrahydrofolate + glycine + H2O = (6S)-5,6,7,8-tetrahydrofolate + L-serine. The protein operates within one-carbon metabolism; tetrahydrofolate interconversion. It functions in the pathway amino-acid biosynthesis; glycine biosynthesis; glycine from L-serine: step 1/1. Functionally, catalyzes the reversible interconversion of serine and glycine with tetrahydrofolate (THF) serving as the one-carbon carrier. This reaction serves as the major source of one-carbon groups required for the biosynthesis of purines, thymidylate, methionine, and other important biomolecules. Also exhibits THF-independent aldolase activity toward beta-hydroxyamino acids, producing glycine and aldehydes, via a retro-aldol mechanism. This chain is Serine hydroxymethyltransferase, found in Helicobacter pylori (strain HPAG1).